The chain runs to 510 residues: Cytochrome P450 4A6 (510 aa).

Positions 1–4 (MSVS) are excised as a propeptide. Glu321 and Cys457 together coordinate heme.

Belongs to the cytochrome P450 family. Heme is required as a cofactor. As to expression, liver; kidney.

Its subcellular location is the endoplasmic reticulum membrane. It localises to the microsome membrane. It carries out the reaction an omega-methyl-long-chain fatty acid + reduced [NADPH--hemoprotein reductase] + O2 = an omega-hydroxy-long-chain fatty acid + oxidized [NADPH--hemoprotein reductase] + H2O + H(+). Cytochromes P450 are a group of heme-thiolate monooxygenases. In liver microsomes, this enzyme is involved in an NADPH-dependent electron transport pathway. It oxidizes a variety of structurally unrelated compounds, including steroids, fatty acids, and xenobiotics. Its function is as follows. The kidney P-450 system is rather specialized for the omega-hydroxylation of fatty acids. Both P450-KA1 and P450-KA2 catalyze the omega- and (omega-1)-hydroxylation of various fatty acids with no drug-metabolizing activity, and hydroxylate prostaglandin A1 and A2 solely at the omega-position. The sequence is that of Cytochrome P450 4A6 (CYP4A6) from Oryctolagus cuniculus (Rabbit).